A 427-amino-acid chain; its full sequence is Serine hydroxymethyltransferase (427 aa).

120 to 122 (GHI) provides a ligand contact to (6S)-5,6,7,8-tetrahydrofolate. Lys-226 carries the N6-(pyridoxal phosphate)lysine modification.

Belongs to the SHMT family. Homodimer. Requires pyridoxal 5'-phosphate as cofactor.

It is found in the cytoplasm. It functions in the pathway amino-acid biosynthesis; glycine biosynthesis; glycine from L-serine: step 1/1. Catalyzes the reversible interconversion of serine and glycine with a modified folate serving as the one-carbon carrier. Also exhibits a pteridine-independent aldolase activity toward beta-hydroxyamino acids, producing glycine and aldehydes, via a retro-aldol mechanism. This is Serine hydroxymethyltransferase from Pyrococcus horikoshii (strain ATCC 700860 / DSM 12428 / JCM 9974 / NBRC 100139 / OT-3).